Reading from the N-terminus, the 776-residue chain is 5-methyltetrahydropteroyltriglutamate--homocysteine methyltransferase (776 aa).

Residues R16 to K19 and K112 contribute to the 5-methyltetrahydropteroyltri-L-glutamate site. L-homocysteine contacts are provided by residues I435 to S437 and E488. L-methionine-binding positions include I435–S437 and E488. Residues R519 to C520 and W565 each bind 5-methyltetrahydropteroyltri-L-glutamate. D603 serves as a coordination point for L-homocysteine. D603 lines the L-methionine pocket. E609 contacts 5-methyltetrahydropteroyltri-L-glutamate. Positions 645, 647, and 669 each coordinate Zn(2+). H698 functions as the Proton donor in the catalytic mechanism. C730 contributes to the Zn(2+) binding site.

This sequence belongs to the vitamin-B12 independent methionine synthase family. Zn(2+) serves as cofactor.

It carries out the reaction 5-methyltetrahydropteroyltri-L-glutamate + L-homocysteine = tetrahydropteroyltri-L-glutamate + L-methionine. It participates in amino-acid biosynthesis; L-methionine biosynthesis via de novo pathway; L-methionine from L-homocysteine (MetE route): step 1/1. In terms of biological role, catalyzes the transfer of a methyl group from 5-methyltetrahydrofolate to homocysteine resulting in methionine formation. In Ralstonia pickettii (strain 12J), this protein is 5-methyltetrahydropteroyltriglutamate--homocysteine methyltransferase.